The chain runs to 128 residues: MSRPDWDEYFLGIATAAAQRSDCERSKVGAVVVKDRRVRGTGYNGAPAGAAGCSTCPRRLSGAVPGVSDYSSGATRCVAVHAEANALLYCDREDLIGATLYVTREPCYACSNLIAASGIERVVYPKES.

The CMP/dCMP-type deaminase domain occupies 5-128; sequence DWDEYFLGIA…IERVVYPKES (124 aa). A Zn(2+)-binding site is contributed by histidine 81. The active-site Proton donor is glutamate 83. Zn(2+) is bound by residues cysteine 107 and cysteine 110.

This sequence belongs to the cytidine and deoxycytidylate deaminase family.

It carries out the reaction dCMP + H2O + H(+) = dUMP + NH4(+). In Mycobacterium (Mycobacteriophage D29), this protein is Deoxycytidylate deaminase (36.1).